A 186-amino-acid polypeptide reads, in one-letter code: Ribosome-recycling factor (186 aa).

Belongs to the RRF family.

It localises to the cytoplasm. Responsible for the release of ribosomes from messenger RNA at the termination of protein biosynthesis. May increase the efficiency of translation by recycling ribosomes from one round of translation to another. The sequence is that of Ribosome-recycling factor from Burkholderia multivorans (strain ATCC 17616 / 249).